We begin with the raw amino-acid sequence, 381 residues long: Sulfate/thiosulfate import ATP-binding protein CysA (381 aa).

The ABC transporter domain occupies 3–233; that stretch reads ILVYEVSKSL…PIDYFVGIFS (231 aa). 35-42 is an ATP binding site; that stretch reads GPSGSGKS.

This sequence belongs to the ABC transporter superfamily. Sulfate/tungstate importer (TC 3.A.1.6) family.

It localises to the plastid. It is found in the chloroplast. It carries out the reaction sulfate(out) + ATP + H2O = sulfate(in) + ADP + phosphate + H(+). The catalysed reaction is thiosulfate(out) + ATP + H2O = thiosulfate(in) + ADP + phosphate + H(+). In terms of biological role, part of the ABC transporter complex involved in sulfate/thiosulfate import. Responsible for energy coupling to the transport system. The protein is Sulfate/thiosulfate import ATP-binding protein CysA of Anthoceros angustus (Hornwort).